The sequence spans 439 residues: MDKNGIVLMRKYELGRLLGQGTFAKVYHARNIKTGESVAIKVIDKQKVAKVGLIDQIKREISVMRLVRHPHVVFLHEVMASKTKIYFAMEYVKGGELFDKVSKGKLKENIARKYFQQLIGAIDYCHSRGVYHRDLKPENLLLDENGDLKISDFGLSALRESKQQDGLLHTTCGTPAYVAPEVIGKKGYDGAKADVWSCGVVLYVLLAGFLPFHEQNLVEMYRKITKGEFKCPNWFPPEVKKLLSRILDPNPNSRIKIEKIMENSWFQKGFKKIETPKSPESHQIDSLISDVHAAFSVKPMSYNAFDLISSLSQGFDLSGLFEKEERSESKFTTKKDAKEIVSKFEEIATSSERFNLTKSDVGVKMEDKREGRKGHLAIDVEIFEVTNSFHMVEFKKSGGDTMEYKQFCDRELRPSLKDIVWKWQGNNNNSNNEKIEVIH.

Positions 12 to 266 (YELGRLLGQG…IEKIMENSWF (255 aa)) constitute a Protein kinase domain. Residues 18–26 (LGQGTFAKV) and lysine 41 each bind ATP. Aspartate 134 serves as the catalytic Proton acceptor. Positions 152 to 181 (DFGLSALRESKQQDGLLHTTCGTPAYVAPE) are activation loop. Phosphoserine is present on serine 156. A Phosphothreonine modification is found at threonine 170. The 26-residue stretch at 297–322 (VKPMSYNAFDLISSLSQGFDLSGLFE) folds into the NAF domain. A PPI region spans residues 326–356 (RSESKFTTKKDAKEIVSKFEEIATSSERFNL).

This sequence belongs to the protein kinase superfamily. CAMK Ser/Thr protein kinase family. SNF1 subfamily. Mn(2+) is required as a cofactor. Autophosphorylated. In terms of tissue distribution, confined to mature leaves.

It carries out the reaction L-seryl-[protein] + ATP = O-phospho-L-seryl-[protein] + ADP + H(+). It catalyses the reaction L-threonyl-[protein] + ATP = O-phospho-L-threonyl-[protein] + ADP + H(+). Functionally, CIPK serine-threonine protein kinases interact with CBL proteins. Binding of a CBL protein to the regulatory NAF domain of CIPK protein lead to the activation of the kinase in a calcium-dependent manner. Required for the abscisic acid-mediated (ABA) signaling pathway involved in seed germination and growth elongation inhibition. The protein is CBL-interacting serine/threonine-protein kinase 20 (CIPK20) of Arabidopsis thaliana (Mouse-ear cress).